The chain runs to 501 residues: Glycerol kinase (501 aa).

T14 provides a ligand contact to ADP. ATP is bound by residues T14, T15, and S16. T14 is a sn-glycerol 3-phosphate binding site. An ADP-binding site is contributed by R18. Positions 84, 85, and 136 each coordinate sn-glycerol 3-phosphate. Glycerol-binding residues include R84, E85, and Y136. Residue H231 is modified to Phosphohistidine; by HPr. Residue D245 participates in sn-glycerol 3-phosphate binding. The glycerol site is built by D245 and Q246. T267 and G310 together coordinate ADP. ATP-binding residues include T267, G310, Q314, and G411. ADP is bound by residues G411 and N415.

This sequence belongs to the FGGY kinase family. Homotetramer and homodimer (in equilibrium). The phosphoenolpyruvate-dependent sugar phosphotransferase system (PTS), including enzyme I, and histidine-containing protein (HPr) are required for the phosphorylation of His-231, which leads to the activation of the enzyme.

The catalysed reaction is glycerol + ATP = sn-glycerol 3-phosphate + ADP + H(+). The protein operates within polyol metabolism; glycerol degradation via glycerol kinase pathway; sn-glycerol 3-phosphate from glycerol: step 1/1. Activated by phosphorylation and inhibited by fructose 1,6-bisphosphate (FBP). Functionally, key enzyme in the regulation of glycerol uptake and metabolism. Catalyzes the phosphorylation of glycerol to yield sn-glycerol 3-phosphate. This chain is Glycerol kinase, found in Enterococcus faecalis (strain ATCC 700802 / V583).